The chain runs to 222 residues: Ribosomal RNA small subunit methyltransferase G (222 aa).

S-adenosyl-L-methionine contacts are provided by residues Gly-84, Phe-89, 141 to 142 (VE), and Arg-154.

This sequence belongs to the methyltransferase superfamily. RNA methyltransferase RsmG family.

The protein localises to the cytoplasm. The catalysed reaction is guanosine(527) in 16S rRNA + S-adenosyl-L-methionine = N(7)-methylguanosine(527) in 16S rRNA + S-adenosyl-L-homocysteine. In terms of biological role, specifically methylates the N7 position of guanine in position 527 of 16S rRNA. The polypeptide is Ribosomal RNA small subunit methyltransferase G (Bradyrhizobium sp. (strain BTAi1 / ATCC BAA-1182)).